A 398-amino-acid polypeptide reads, in one-letter code: 8-amino-7-oxononanoate synthase (398 aa).

Residue R23 coordinates substrate. G110–Y111 contacts pyridoxal 5'-phosphate. A substrate-binding site is contributed by H135. Positions 181, 209, and 237 each coordinate pyridoxal 5'-phosphate. K240 carries the post-translational modification N6-(pyridoxal phosphate)lysine. T354 lines the substrate pocket.

The protein belongs to the class-II pyridoxal-phosphate-dependent aminotransferase family. BioF subfamily. As to quaternary structure, homodimer. It depends on pyridoxal 5'-phosphate as a cofactor.

It catalyses the reaction 6-carboxyhexanoyl-[ACP] + L-alanine + H(+) = (8S)-8-amino-7-oxononanoate + holo-[ACP] + CO2. It participates in cofactor biosynthesis; biotin biosynthesis. Catalyzes the decarboxylative condensation of pimeloyl-[acyl-carrier protein] and L-alanine to produce 8-amino-7-oxononanoate (AON), [acyl-carrier protein], and carbon dioxide. The sequence is that of 8-amino-7-oxononanoate synthase from Anaeromyxobacter sp. (strain K).